Consider the following 421-residue polypeptide: UPF0229 protein lpp2857 (421 aa).

Residues 83–110 (IAGDRIKRPSGGGAGGAGGNASDSGEGE) form a disordered region. Residues 92 to 101 (SGGGAGGAGG) show a composition bias toward gly residues.

Belongs to the UPF0229 family.

In Legionella pneumophila (strain Paris), this protein is UPF0229 protein lpp2857.